Consider the following 204-residue polypeptide: Secreted phosphoprotein 24 (204 aa).

An N-terminal signal peptide occupies residues 1 to 23 (MEKRAMRMLAMFVLGTSFWSCAG). Disulfide bonds link Cys-86/Cys-97 and Cys-110/Cys-128. Ser-90 bears the Phosphoserine mark. Phosphoserine is present on residues Ser-138, Ser-139, Ser-166, and Ser-175. A disordered region spans residues 179 to 204 (MRRFPPPGNRSFPNQWPRARTNTGFE).

Belongs to the SPP2 family. Post-translationally, multiply phosphorylated at serine residues. Phosphorylation sites are present in the extracellular medium.

Its subcellular location is the secreted. Functionally, could coordinate an aspect of bone turnover. This Sus scrofa (Pig) protein is Secreted phosphoprotein 24 (SPP2).